Here is a 316-residue protein sequence, read N- to C-terminus: Ribosomal protein L11 methyltransferase (316 aa).

Residues T157, G178, D200, and N243 each contribute to the S-adenosyl-L-methionine site.

This sequence belongs to the methyltransferase superfamily. PrmA family.

It is found in the cytoplasm. The catalysed reaction is L-lysyl-[protein] + 3 S-adenosyl-L-methionine = N(6),N(6),N(6)-trimethyl-L-lysyl-[protein] + 3 S-adenosyl-L-homocysteine + 3 H(+). Its function is as follows. Methylates ribosomal protein L11. In Streptococcus pneumoniae (strain ATCC 700669 / Spain 23F-1), this protein is Ribosomal protein L11 methyltransferase.